Reading from the N-terminus, the 309-residue chain is Aspartate carbamoyltransferase catalytic subunit (309 aa).

The carbamoyl phosphate site is built by arginine 54 and threonine 55. Residue lysine 82 coordinates L-aspartate. Carbamoyl phosphate-binding residues include arginine 104, histidine 132, and glutamine 135. Positions 165 and 219 each coordinate L-aspartate. Carbamoyl phosphate contacts are provided by glycine 260 and proline 261.

The protein belongs to the aspartate/ornithine carbamoyltransferase superfamily. ATCase family. As to quaternary structure, heterododecamer (2C3:3R2) of six catalytic PyrB chains organized as two trimers (C3), and six regulatory PyrI chains organized as three dimers (R2).

The enzyme catalyses carbamoyl phosphate + L-aspartate = N-carbamoyl-L-aspartate + phosphate + H(+). Its pathway is pyrimidine metabolism; UMP biosynthesis via de novo pathway; (S)-dihydroorotate from bicarbonate: step 2/3. Catalyzes the condensation of carbamoyl phosphate and aspartate to form carbamoyl aspartate and inorganic phosphate, the committed step in the de novo pyrimidine nucleotide biosynthesis pathway. In Parafrankia sp. (strain EAN1pec), this protein is Aspartate carbamoyltransferase catalytic subunit.